Consider the following 335-residue polypeptide: 2-acylglycerol O-acyltransferase 1 (335 aa).

The next 2 helical transmembrane spans lie at 24 to 44 (WVFS…SLVL) and 47 to 67 (LWLI…TPQA). N-linked (GlcNAc...) asparagine glycosylation is found at N77, N125, and N180.

It belongs to the diacylglycerol acyltransferase family.

The protein localises to the endoplasmic reticulum membrane. The enzyme catalyses a 2-acylglycerol + an acyl-CoA = a 1,2-diacylglycerol + CoA. The catalysed reaction is a 2-acylglycerol + an acyl-CoA = a 1,2-diacyl-sn-glycerol + CoA. It catalyses the reaction a 2-acylglycerol + an acyl-CoA = a 2,3-diacyl-sn-glycerol + CoA. It carries out the reaction a 1-acylglycerol + an acyl-CoA = a 1,2-diacylglycerol + CoA. The enzyme catalyses a 1-acylglycerol + an acyl-CoA = a 1,3-diacylglycerol + CoA. The catalysed reaction is a 1-acyl-sn-glycerol + an acyl-CoA = a 1,3-diacyl-sn-glycerol + CoA. It catalyses the reaction a 3-acyl-sn-glycerol + an acyl-CoA = a 1,3-diacyl-sn-glycerol + CoA. It participates in glycerolipid metabolism; triacylglycerol biosynthesis. Its function is as follows. Involved in glycerolipid synthesis and lipid metabolism. Catalyzes the formation of diacylglycerol, the precursor of triacylglycerol, by transferring the acyl chain of a fatty acyl-CoA to a monoacylglycerol, mainly at the sn-1 or sn-3 positions. It uses both sn-2-monoacylglycerol (2-acylglycerol) and sn-1-monoacylglycerol (1-acyl-sn-glycerol) equally well as substrates, and uses sn-3-monoacylglycerol (3-acyl-sn-glycerol) with lower efficiency. The polypeptide is 2-acylglycerol O-acyltransferase 1 (mogat1) (Xenopus tropicalis (Western clawed frog)).